The sequence spans 418 residues: Gamma-glutamyl phosphate reductase (418 aa).

It belongs to the gamma-glutamyl phosphate reductase family.

The protein resides in the cytoplasm. It catalyses the reaction L-glutamate 5-semialdehyde + phosphate + NADP(+) = L-glutamyl 5-phosphate + NADPH + H(+). It functions in the pathway amino-acid biosynthesis; L-proline biosynthesis; L-glutamate 5-semialdehyde from L-glutamate: step 2/2. Functionally, catalyzes the NADPH-dependent reduction of L-glutamate 5-phosphate into L-glutamate 5-semialdehyde and phosphate. The product spontaneously undergoes cyclization to form 1-pyrroline-5-carboxylate. The chain is Gamma-glutamyl phosphate reductase from Pelobacter propionicus (strain DSM 2379 / NBRC 103807 / OttBd1).